The primary structure comprises 114 residues: Iron-sulfur cluster insertion protein ErpA (114 aa).

Iron-sulfur cluster contacts are provided by cysteine 42, cysteine 106, and cysteine 108.

It belongs to the HesB/IscA family. In terms of assembly, homodimer. Iron-sulfur cluster is required as a cofactor.

Functionally, required for insertion of 4Fe-4S clusters for at least IspG. This Yersinia pseudotuberculosis serotype O:1b (strain IP 31758) protein is Iron-sulfur cluster insertion protein ErpA.